A 465-amino-acid chain; its full sequence is ATP synthase subunit beta (465 aa).

ATP is bound at residue 155 to 162; it reads GGAGVGKT.

Belongs to the ATPase alpha/beta chains family. As to quaternary structure, F-type ATPases have 2 components, CF(1) - the catalytic core - and CF(0) - the membrane proton channel. CF(1) has five subunits: alpha(3), beta(3), gamma(1), delta(1), epsilon(1). CF(0) has three main subunits: a(1), b(2) and c(9-12). The alpha and beta chains form an alternating ring which encloses part of the gamma chain. CF(1) is attached to CF(0) by a central stalk formed by the gamma and epsilon chains, while a peripheral stalk is formed by the delta and b chains.

It is found in the cell membrane. The enzyme catalyses ATP + H2O + 4 H(+)(in) = ADP + phosphate + 5 H(+)(out). Functionally, produces ATP from ADP in the presence of a proton gradient across the membrane. The catalytic sites are hosted primarily by the beta subunits. This chain is ATP synthase subunit beta, found in Buchnera aphidicola subsp. Acyrthosiphon pisum (strain 5A).